The following is a 463-amino-acid chain: Cysteine--tRNA ligase (463 aa).

C29 provides a ligand contact to Zn(2+). The 'HIGH' region signature appears at 31–41; that stretch reads PTVYDFAHIGN. Zn(2+) contacts are provided by C227, H252, and E256. The short motif at 285–289 is the 'KMSKS' region element; it reads KMSKS. K288 provides a ligand contact to ATP.

It belongs to the class-I aminoacyl-tRNA synthetase family. In terms of assembly, monomer. Requires Zn(2+) as cofactor.

It is found in the cytoplasm. It carries out the reaction tRNA(Cys) + L-cysteine + ATP = L-cysteinyl-tRNA(Cys) + AMP + diphosphate. The polypeptide is Cysteine--tRNA ligase (Rhodopseudomonas palustris (strain BisB5)).